Here is a 293-residue protein sequence, read N- to C-terminus: Protease HtpX (293 aa).

2 helical membrane-spanning segments follow: residues 4-24 and 32-52; these read IALF…VLSL and VTGL…VSLL. H139 lines the Zn(2+) pocket. Residue E140 is part of the active site. H143 lines the Zn(2+) pocket. 2 helical membrane passes run 158-178 and 193-213; these read VVNT…AGFL and LIYF…ASII. Zn(2+) is bound at residue E222.

This sequence belongs to the peptidase M48B family. Zn(2+) is required as a cofactor.

The protein localises to the cell inner membrane. The protein is Protease HtpX of Cronobacter sakazakii (strain ATCC BAA-894) (Enterobacter sakazakii).